A 119-amino-acid polypeptide reads, in one-letter code: Ribonuclease P protein component (119 aa).

The protein belongs to the RnpA family. Consists of a catalytic RNA component (M1 or rnpB) and a protein subunit.

It catalyses the reaction Endonucleolytic cleavage of RNA, removing 5'-extranucleotides from tRNA precursor.. In terms of biological role, RNaseP catalyzes the removal of the 5'-leader sequence from pre-tRNA to produce the mature 5'-terminus. It can also cleave other RNA substrates such as 4.5S RNA. The protein component plays an auxiliary but essential role in vivo by binding to the 5'-leader sequence and broadening the substrate specificity of the ribozyme. The polypeptide is Ribonuclease P protein component (Erwinia tasmaniensis (strain DSM 17950 / CFBP 7177 / CIP 109463 / NCPPB 4357 / Et1/99)).